The chain runs to 209 residues: Uracil phosphoribosyltransferase (209 aa).

5-phospho-alpha-D-ribose 1-diphosphate-binding positions include Arg77, Arg102, and 129-137 (DPMLATGSS). Residues Ile192 and 197–199 (GDA) each bind uracil. Asp198 is a 5-phospho-alpha-D-ribose 1-diphosphate binding site.

This sequence belongs to the UPRTase family. Mg(2+) serves as cofactor.

It carries out the reaction UMP + diphosphate = 5-phospho-alpha-D-ribose 1-diphosphate + uracil. Its pathway is pyrimidine metabolism; UMP biosynthesis via salvage pathway; UMP from uracil: step 1/1. Its activity is regulated as follows. Allosterically activated by GTP. Catalyzes the conversion of uracil and 5-phospho-alpha-D-ribose 1-diphosphate (PRPP) to UMP and diphosphate. The chain is Uracil phosphoribosyltransferase from Metamycoplasma hominis (Mycoplasma hominis).